Consider the following 160-residue polypeptide: Succinate dehydrogenase assembly factor 2-B, mitochondrial (160 aa).

Residues Met1–Ala23 constitute a mitochondrion transit peptide.

It belongs to the SDHAF2 family. In terms of assembly, interacts with the flavoprotein subunit within the SDH catalytic dimer.

It is found in the mitochondrion matrix. Functionally, plays an essential role in the assembly of succinate dehydrogenase (SDH), an enzyme complex (also referred to as respiratory complex II) that is a component of both the tricarboxylic acid (TCA) cycle and the mitochondrial electron transport chain, and which couples the oxidation of succinate to fumarate with the reduction of ubiquinone (coenzyme Q) to ubiquinol. Required for flavinylation (covalent attachment of FAD) of the flavoprotein subunit of the SDH catalytic dimer. This Drosophila pseudoobscura pseudoobscura (Fruit fly) protein is Succinate dehydrogenase assembly factor 2-B, mitochondrial.